The sequence spans 39 residues: Potassium channel toxin alpha-KTx 2.18 (39 aa).

Disulfide bonds link Cys-7-Cys-29, Cys-13-Cys-34, and Cys-17-Cys-36. The residue at position 39 (Ile-39) is an Isoleucine amide.

This sequence belongs to the short scorpion toxin superfamily. Potassium channel inhibitor family. Alpha-KTx 02 subfamily. Expressed by the venom gland.

It localises to the secreted. Functionally, weakly blocks Kv1.3/KCNA3 voltage-gated potassium channels. This chain is Potassium channel toxin alpha-KTx 2.18, found in Centruroides limpidus (Mexican scorpion).